The sequence spans 213 residues: Protein-L-isoaspartate O-methyltransferase (213 aa).

The active site involves Ser61.

This sequence belongs to the methyltransferase superfamily. L-isoaspartyl/D-aspartyl protein methyltransferase family.

Its subcellular location is the cytoplasm. The enzyme catalyses [protein]-L-isoaspartate + S-adenosyl-L-methionine = [protein]-L-isoaspartate alpha-methyl ester + S-adenosyl-L-homocysteine. Functionally, catalyzes the methyl esterification of L-isoaspartyl residues in peptides and proteins that result from spontaneous decomposition of normal L-aspartyl and L-asparaginyl residues. It plays a role in the repair and/or degradation of damaged proteins. This is Protein-L-isoaspartate O-methyltransferase from Maricaulis maris (strain MCS10) (Caulobacter maris).